The chain runs to 83 residues: High-potential iron-sulfur protein (83 aa).

Residues cysteine 43, cysteine 46, cysteine 61, and cysteine 75 each contribute to the [4Fe-4S] cluster site.

The protein belongs to the high-potential iron-sulfur protein (HiPIP) family. Homodimer.

The protein localises to the periplasm. Functionally, specific class of high-redox-potential 4Fe-4S ferredoxins. Functions in anaerobic electron transport in most purple and in some other photosynthetic bacteria and in at least one genus (Paracoccus) of halophilic, denitrifying bacteria. This chain is High-potential iron-sulfur protein, found in Thiocystis violacea.